We begin with the raw amino-acid sequence, 113 residues long: T cell receptor alpha variable 8-6 (113 aa).

A signal peptide spans 1 to 20; that stretch reads MLLLLVPAFQVIFTLGGTRA. In terms of domain architecture, Ig-like spans 21-113; that stretch reads QSVTQLDSQV…DTAEYFCAVS (93 aa). A disulfide bridge links cysteine 42 with cysteine 110. N-linked (GlcNAc...) asparagine glycosylation is found at asparagine 43 and asparagine 87.

As to quaternary structure, alpha-beta TR is a heterodimer composed of an alpha and beta chain; disulfide-linked. The alpha-beta TR is associated with the transmembrane signaling CD3 coreceptor proteins to form the TR-CD3 (TcR or TCR). The assembly of alpha-beta TR heterodimers with CD3 occurs in the endoplasmic reticulum where a single alpha-beta TR heterodimer associates with one CD3D-CD3E heterodimer, one CD3G-CD3E heterodimer and one CD247 homodimer forming a stable octameric structure. CD3D-CD3E and CD3G-CD3E heterodimers preferentially associate with TR alpha and TR beta chains, respectively. The association of the CD247 homodimer is the last step of TcR assembly in the endoplasmic reticulum and is required for transport to the cell surface.

It localises to the cell membrane. In terms of biological role, v region of the variable domain of T cell receptor (TR) alpha chain that participates in the antigen recognition. Alpha-beta T cell receptors are antigen specific receptors which are essential to the immune response and are present on the cell surface of T lymphocytes. Recognize peptide-major histocompatibility (MH) (pMH) complexes that are displayed by antigen presenting cells (APC), a prerequisite for efficient T cell adaptive immunity against pathogens. Binding of alpha-beta TR to pMH complex initiates TR-CD3 clustering on the cell surface and intracellular activation of LCK that phosphorylates the ITAM motifs of CD3G, CD3D, CD3E and CD247 enabling the recruitment of ZAP70. In turn ZAP70 phosphorylates LAT, which recruits numerous signaling molecules to form the LAT signalosome. The LAT signalosome propagates signal branching to three major signaling pathways, the calcium, the mitogen-activated protein kinase (MAPK) kinase and the nuclear factor NF-kappa-B (NF-kB) pathways, leading to the mobilization of transcription factors that are critical for gene expression and essential for T cell growth and differentiation. The T cell repertoire is generated in the thymus, by V-(D)-J rearrangement. This repertoire is then shaped by intrathymic selection events to generate a peripheral T cell pool of self-MH restricted, non-autoaggressive T cells. Post-thymic interaction of alpha-beta TR with the pMH complexes shapes TR structural and functional avidity. The polypeptide is T cell receptor alpha variable 8-6 (Homo sapiens (Human)).